The primary structure comprises 367 residues: Peptide chain release factor 2 (367 aa).

The residue at position 254 (Gln-254) is an N5-methylglutamine.

It belongs to the prokaryotic/mitochondrial release factor family. Methylated by PrmC. Methylation increases the termination efficiency of RF2.

The protein resides in the cytoplasm. Its function is as follows. Peptide chain release factor 2 directs the termination of translation in response to the peptide chain termination codons UGA and UAA. The sequence is that of Peptide chain release factor 2 from Bordetella avium (strain 197N).